The sequence spans 206 residues: LexA repressor (206 aa).

Residues 28–48 (VREICNAVGLSSTSTVHGHLS) constitute a DNA-binding region (H-T-H motif). Catalysis depends on for autocatalytic cleavage activity residues Ser-128 and Lys-166.

Belongs to the peptidase S24 family. As to quaternary structure, homodimer.

The catalysed reaction is Hydrolysis of Ala-|-Gly bond in repressor LexA.. Functionally, represses a number of genes involved in the response to DNA damage (SOS response), including recA and lexA. In the presence of single-stranded DNA, RecA interacts with LexA causing an autocatalytic cleavage which disrupts the DNA-binding part of LexA, leading to derepression of the SOS regulon and eventually DNA repair. The chain is LexA repressor from Ligilactobacillus salivarius (strain UCC118) (Lactobacillus salivarius).